Reading from the N-terminus, the 179-residue chain is HTH-type transcriptional regulator AldR (179 aa).

In terms of domain architecture, HTH asnC-type spans 32 to 93; that stretch reads LDEVDRRILS…DIDPVAVGLP (62 aa). A DNA-binding region (H-T-H motif) is located at residues 51–70; that stretch reads NNALADTVGIAPSTCHGRVR.

As to quaternary structure, homooctamer. Homotetramer. Tetramer of dimers. The N-terminal DNA-binding domains are swapped, forming a dimer, and four dimers are assembled into an octamer through crystal symmetry.

With respect to regulation, the DNA-binding activity of AldR is modulated by interaction of AldR with various amino acids. Alanine, tryptophan, tyrosine and aspartate completely abolish the DNA binding ability of AldR. On the other hand, glutamate and asparagine reduce AldR binding to DNA but do not completely abolish it. Binding of amino acids can lead to structural modifications and changes in oligomeric association. Activity is also inhibited by 3 small molecule inhibitors, tetrahydroquinoline carbonitrile derivative (S010-0261), levothyroxine and liothyronine, which can disrupt the AldR-DNA complex. In terms of biological role, transcriptional regulator that might play a role under hypoxic conditions. Regulates the expression of ald, which encodes L-alanine dehydrogenase. Serves as both an activator for ald expression in the presence of L-alanine and a repressor in the absence of L-alanine. Acts by binding directly to the upstream region of the ald gene. Four AldR-binding sites (O2, O1, O4 and O3) were identified upstream of the ald gene. O2, O1 and O4 are required for the induction of ald expression by alanine, while O3 is directly involved in the repression of ald expression, by occluding the access of RNA polymerase to the ald promoter. In addition to O3, both O1 and O4 are also necessary for full repression of ald expression in the absence of alanine. The protein is HTH-type transcriptional regulator AldR of Mycobacterium tuberculosis (strain ATCC 25618 / H37Rv).